We begin with the raw amino-acid sequence, 20 residues long: Peptide encoded by miPEP171b (20 aa).

In terms of tissue distribution, lateral root initiations.

In terms of biological role, regulatory peptide encoded by the primary transcript (pri-miR171b) of the microRNA miR171b that enhances the accumulation of its corresponding mature miRNA. Acts probably as a transcriptional activator of its corresponding pri-miRNA. Has no effect on the accumulation of other miRNAs. Addition of synthetic miPEP171b increases the abundance of miR171b, with consequent reduction of lateral root formation. This Medicago truncatula (Barrel medic) protein is Peptide encoded by miPEP171b.